The following is a 773-amino-acid chain: ATP-dependent zinc metalloprotease YME1L1 (773 aa).

At 1-295 (MFSLSSTVQP…TNDSLRRTRL (295 aa)) the chain is on the mitochondrial matrix side. Residues 296-316 (ILFVLLLFGIYGLLKNPFLSV) form a helical membrane-spanning segment. Over 317–773 (RFRTTTGLDS…VLEGKKLEVR (457 aa)) the chain is Mitochondrial intermembrane. Residues V341, T383, G384, K385, T386, and L387 each contribute to the ATP site. Residue H599 coordinates Zn(2+). E600 is an active-site residue. Residues H603 and D677 each coordinate Zn(2+).

It in the N-terminal section; belongs to the AAA ATPase family. This sequence in the C-terminal section; belongs to the peptidase M41 family. In terms of assembly, homohexamer; may also form heterohexamers. Exists in several complexes of 600-1100 kDa. Interacts with AFG1L. The cofactor is Zn(2+). Post-translationally, proteolytically processed by mitochondrial processing peptidase (MPP) to generate the mature form. Degraded in an OMA1-dependent manner in response to oxidative stress. As to expression, high expression in cardiac and skeletal muscle mitochondria.

The protein resides in the mitochondrion inner membrane. It localises to the mitochondrion. It carries out the reaction ATP + H2O = ADP + phosphate + H(+). Functionally, ATP-dependent metalloprotease that catalyzes the degradation of folded and unfolded proteins with a suitable degron sequence in the mitochondrial intermembrane region. Plays an important role in regulating mitochondrial morphology and function by cleaving OPA1 at position S2, giving rise to a form of OPA1 that promotes maintenance of normal mitochondrial structure and mitochondrial protein metabolism. Ensures cell proliferation, maintains normal cristae morphology and complex I respiration activity, promotes antiapoptotic activity and protects mitochondria from the accumulation of oxidatively damaged membrane proteins. Required to control the accumulation of nonassembled respiratory chain subunits (NDUFB6, OX4 and ND1). Involved in the mitochondrial adaptation in response to various signals, such as stress or developmental cues, by mediating degradation of mitochondrial proteins to rewire the mitochondrial proteome. Catalyzes degradation of mitochondrial proteins, such as translocases, lipid transfer proteins and metabolic enzymes in response to nutrient starvation in order to limit mitochondrial biogenesis: mechanistically, YME1L is activated by decreased phosphatidylethanolamine levels caused by LPIN1 activity in response to mTORC1 inhibition. Acts as a regulator of adult neural stem cell self-renewal by promoting mitochondrial proteome rewiring, preserving neural stem and progenitor cells self-renewal. Required for normal, constitutive degradation of PRELID1. Catalyzes the degradation of OMA1 in response to membrane depolarization. Mediates degradation of TIMM17A downstream of the integrated stress response (ISR). Catalyzes degradation of MICU1 when MICU1 is not assembled via an interchain disulfide. The protein is ATP-dependent zinc metalloprotease YME1L1 (YME1L1) of Homo sapiens (Human).